A 948-amino-acid chain; its full sequence is RNA polymerase-associated protein RapA (948 aa).

In terms of domain architecture, Helicase ATP-binding spans 164-332 (EVADRSAPRV…FARLRLLDPN (169 aa)). 177–184 (DEVGLGKT) serves as a coordination point for ATP. The DEAH box signature appears at 278–281 (DEAH). Positions 473 to 627 (RVDWLIDTLK…TCPTGNALQH (155 aa)) constitute a Helicase C-terminal domain.

It belongs to the SNF2/RAD54 helicase family. RapA subfamily. Interacts with the RNAP. Has a higher affinity for the core RNAP than for the holoenzyme. Its ATPase activity is stimulated by binding to RNAP.

Its function is as follows. Transcription regulator that activates transcription by stimulating RNA polymerase (RNAP) recycling in case of stress conditions such as supercoiled DNA or high salt concentrations. Probably acts by releasing the RNAP, when it is trapped or immobilized on tightly supercoiled DNA. Does not activate transcription on linear DNA. Probably not involved in DNA repair. The polypeptide is RNA polymerase-associated protein RapA (Pseudomonas putida (strain GB-1)).